We begin with the raw amino-acid sequence, 284 residues long: 2-dehydro-3-deoxyphosphooctonate aldolase (284 aa).

The protein belongs to the KdsA family.

It localises to the cytoplasm. It carries out the reaction D-arabinose 5-phosphate + phosphoenolpyruvate + H2O = 3-deoxy-alpha-D-manno-2-octulosonate-8-phosphate + phosphate. It participates in carbohydrate biosynthesis; 3-deoxy-D-manno-octulosonate biosynthesis; 3-deoxy-D-manno-octulosonate from D-ribulose 5-phosphate: step 2/3. Its pathway is bacterial outer membrane biogenesis; lipopolysaccharide biosynthesis. This Yersinia pseudotuberculosis serotype O:1b (strain IP 31758) protein is 2-dehydro-3-deoxyphosphooctonate aldolase.